Here is a 426-residue protein sequence, read N- to C-terminus: Multifunctional protein ADE2 (426 aa).

The SAICAR synthetase stretch occupies residues 1 to 261 (MAPAASELKL…WVAERVELLL (261 aa)). The tract at residues 262–426 (KTKSQGRVVV…ADKKLRECTL (165 aa)) is AIR carboxylase.

This sequence in the N-terminal section; belongs to the SAICAR synthetase family. It in the C-terminal section; belongs to the AIR carboxylase family. Class II subfamily. Homooctamer.

The catalysed reaction is 5-amino-1-(5-phospho-D-ribosyl)imidazole-4-carboxylate + L-aspartate + ATP = (2S)-2-[5-amino-1-(5-phospho-beta-D-ribosyl)imidazole-4-carboxamido]succinate + ADP + phosphate + 2 H(+). The enzyme catalyses 5-amino-1-(5-phospho-D-ribosyl)imidazole-4-carboxylate + H(+) = 5-amino-1-(5-phospho-beta-D-ribosyl)imidazole + CO2. It participates in purine metabolism; IMP biosynthesis via de novo pathway; 5-amino-1-(5-phospho-D-ribosyl)imidazole-4-carboxamide from 5-amino-1-(5-phospho-D-ribosyl)imidazole-4-carboxylate: step 1/2. Its pathway is purine metabolism; IMP biosynthesis via de novo pathway; 5-amino-1-(5-phospho-D-ribosyl)imidazole-4-carboxylate from 5-amino-1-(5-phospho-D-ribosyl)imidazole (carboxylase route): step 1/1. The sequence is that of Multifunctional protein ADE2 (AIRC) from Gallus gallus (Chicken).